The sequence spans 208 residues: Small ribosomal subunit protein uS4 (208 aa).

The region spanning 98 to 161 (RRLDNVIYRL…RKMPVIAEAQ (64 aa)) is the S4 RNA-binding domain.

This sequence belongs to the universal ribosomal protein uS4 family. As to quaternary structure, part of the 30S ribosomal subunit. Contacts protein S5. The interaction surface between S4 and S5 is involved in control of translational fidelity.

Its function is as follows. One of the primary rRNA binding proteins, it binds directly to 16S rRNA where it nucleates assembly of the body of the 30S subunit. In terms of biological role, with S5 and S12 plays an important role in translational accuracy. The polypeptide is Small ribosomal subunit protein uS4 (Oleidesulfovibrio alaskensis (strain ATCC BAA-1058 / DSM 17464 / G20) (Desulfovibrio alaskensis)).